The primary structure comprises 493 residues: Ribose import ATP-binding protein RbsA (493 aa).

2 consecutive ABC transporter domains span residues 5–241 and 252–491; these read LKIS…VGRR and EKGE…AAAI. An ATP-binding site is contributed by 37 to 44; sequence GENGAGKS.

It belongs to the ABC transporter superfamily. Ribose importer (TC 3.A.1.2.1) family. As to quaternary structure, the complex is composed of an ATP-binding protein (RbsA), two transmembrane proteins (RbsC) and a solute-binding protein (RbsB).

The protein resides in the cell inner membrane. It catalyses the reaction D-ribose(out) + ATP + H2O = D-ribose(in) + ADP + phosphate + H(+). Functionally, part of the ABC transporter complex RbsABC involved in ribose import. Responsible for energy coupling to the transport system. This Haemophilus influenzae (strain ATCC 51907 / DSM 11121 / KW20 / Rd) protein is Ribose import ATP-binding protein RbsA.